The sequence spans 163 residues: Xanthine-guanine phosphoribosyltransferase (163 aa).

5-phospho-alpha-D-ribose 1-diphosphate is bound by residues 43–44 (RG) and 95–103 (DDLADTGGT). Residue aspartate 96 coordinates Mg(2+). 2 residues coordinate guanine: aspartate 99 and isoleucine 142. 2 residues coordinate xanthine: aspartate 99 and isoleucine 142. GMP-binding positions include 99–103 (DTGGT) and 141–142 (WI).

Belongs to the purine/pyrimidine phosphoribosyltransferase family. XGPT subfamily. Homotetramer. Requires Mg(2+) as cofactor.

The protein resides in the cell inner membrane. It carries out the reaction GMP + diphosphate = guanine + 5-phospho-alpha-D-ribose 1-diphosphate. The catalysed reaction is XMP + diphosphate = xanthine + 5-phospho-alpha-D-ribose 1-diphosphate. It catalyses the reaction IMP + diphosphate = hypoxanthine + 5-phospho-alpha-D-ribose 1-diphosphate. It participates in purine metabolism; GMP biosynthesis via salvage pathway; GMP from guanine: step 1/1. Its pathway is purine metabolism; XMP biosynthesis via salvage pathway; XMP from xanthine: step 1/1. Purine salvage pathway enzyme that catalyzes the transfer of the ribosyl-5-phosphate group from 5-phospho-alpha-D-ribose 1-diphosphate (PRPP) to the N9 position of the 6-oxopurines guanine and xanthine to form the corresponding ribonucleotides GMP (guanosine 5'-monophosphate) and XMP (xanthosine 5'-monophosphate), with the release of PPi. To a lesser extent, also acts on hypoxanthine. The chain is Xanthine-guanine phosphoribosyltransferase from Nitratidesulfovibrio vulgaris (strain ATCC 29579 / DSM 644 / CCUG 34227 / NCIMB 8303 / VKM B-1760 / Hildenborough) (Desulfovibrio vulgaris).